A 719-amino-acid chain; its full sequence is Forkhead box protein K1 (719 aa).

At Ala-2 the chain carries N-acetylalanine. The interaction with SIN3A and SIN3B stretch occupies residues 2–40 (AEVGEDSGARALLALRSAPCSPVLCAAAAAAAFPATTSP). Residues 35–67 (PATTSPPPPAQPPPGPPALPAEPGPGPVPSTVA) are disordered. The span at 38-62 (TSPPPPAQPPPGPPALPAEPGPGPV) shows a compositional bias: pro residues. The tract at residues 81-406 (AASVRQSPGP…PLSSRSAPAS (326 aa)) is required for interaction with FOXO4 and MEF2C. Ser-87 is subject to Phosphoserine. The region spanning 109-161 (VTIGRNSSQGSVDLSMGLSSFISRRHLQLSFQEPHFYLRCLGKNGVFVDGAFQ) is the FHA domain. 2 positions are modified to omega-N-methylarginine: Arg-147 and Arg-177. 4 positions are modified to phosphoserine: Ser-199, Ser-209, Ser-225, and Ser-229. Thr-231 and Thr-233 each carry phosphothreonine. 4 positions are modified to phosphoserine: Ser-239, Ser-243, Ser-281, and Ser-285. Residues 291–386 (KPPYSYAQLI…EQAFRKRRQR (96 aa)) constitute a DNA-binding region (fork-head). The disordered stretch occupies residues 399 to 443 (SSRSAPASPTHPGLMSPRSSGLQTPECLSREGSPIPHDPDLGSKL). A phosphoserine mark is found at Ser-402 and Ser-406. At Thr-408 the chain carries Phosphothreonine. A Phosphoserine modification is found at Ser-414. Thr-422 is modified (phosphothreonine). 3 positions are modified to phosphoserine: Ser-427, Ser-431, and Ser-445. Positions 665 to 685 (AANAAPTPAASTTTSASSSGE) are enriched in low complexity. Residues 665 to 719 (AANAAPTPAASTTTSASSSGEPEVKRSRVEEPGGTATTQPTAMAATGPQGPGTGE) are disordered. Over residues 686–695 (PEVKRSRVEE) the composition is skewed to basic and acidic residues. Over residues 696–712 (PGGTATTQPTAMAATGP) the composition is skewed to low complexity.

In terms of assembly, interacts with SIN3A and SIN3B (via PAH2) to form a complex which represses transcription. Component of SIN3A-, but not SIN3B-, containing multiprotein complexes. Interacts with FOXO4 and MEF2C; both interactions inhibit FOXO4 and MEF2C transactivation activity. Interacts (when phosphorylated) with YWHAE/14-3-3-epsilon; promotes sequestration in the cytoplasm and leads to impaired ability to bind DNA. Interacts with FHL2. Interacts with SRF. Interacts with DVL2 and DVL3; the interaction induces DVL2 nuclear translocation. Interacts with BAP1 (when phosphorylated). Accessory component of the polycomb repressive deubiquitinase (PR-DUB) complex, at least composed of BAP1, one of ASXL1, ASXL2 or (probably) ASXL3 and one of MBD5 or MBD6. The PR-DUB core associates with a number of accessory proteins, including FOXK1, FOXK2, KDM1B, HCFC1 and OGT. Phosphorylation by GSK3 (GSK3A or GSK3B) promotes interaction with YWHAE/14-3-3-epsilon and retention in the cytoplasm. In response to mTORC1 signaling, phosphorylation by GSK3 is prevented, leading to translocation to the nucleus. As to expression, expressed in tissues and cells in which the myoglobin gene is transcriptionally active including cardiac and skeletal myocytes, brain and kidney. In the adult brain, expressed in the piriform cortex and the indusium griseum. In the hippocampus, expression is localized to the dentate gyrus and CA3 area. In the cerebellum, expression is confined to the Purkinje cell layer. Present in neuroretinal cells: expressed in rod bipolar cells, amacrine cells and ganglion cells (at protein level).

The protein resides in the nucleus. It is found in the cytoplasm. Functionally, transcriptional regulator involved in different processes such as glucose metabolism, aerobic glycolysis, muscle cell differentiation and autophagy. Recognizes and binds the forkhead DNA sequence motif (5'-GTAAACA-3') and can both act as a transcription activator or repressor, depending on the context. Together with FOXK2, acts as a key regulator of metabolic reprogramming towards aerobic glycolysis, a process in which glucose is converted to lactate in the presence of oxygen. Acts by promoting expression of enzymes for glycolysis (such as hexokinase-2 (HK2), phosphofructokinase, pyruvate kinase (PKLR) and lactate dehydrogenase), while suppressing further oxidation of pyruvate in the mitochondria by up-regulating pyruvate dehydrogenase kinases PDK1 and PDK4. Probably plays a role in gluconeogenesis during overnight fasting, when lactate from white adipose tissue and muscle is the main substrate. Involved in mTORC1-mediated metabolic reprogramming: in response to mTORC1 signaling, translocates into the nucleus and regulates the expression of genes associated with glycolysis and downstream anabolic pathways, such as HIF1A, thereby regulating glucose metabolism. Together with FOXK2, acts as a negative regulator of autophagy in skeletal muscle: in response to starvation, enters the nucleus, binds the promoters of autophagy genes and represses their expression, preventing proteolysis of skeletal muscle proteins. Acts as a transcriptional regulator of the myogenic progenitor cell population in skeletal muscle. Binds to the upstream enhancer region (CCAC box) of myoglobin (MB) gene, regulating the myogenic progenitor cell population. Promotes muscle progenitor cell proliferation by repressing the transcriptional activity of FOXO4, thereby inhibiting myogenic differentiation. Involved in remodeling processes of adult muscles that occur in response to physiological stimuli. Required to correct temporal orchestration of molecular and cellular events necessary for muscle repair. Represses myogenic differentiation by inhibiting MEFC activity. Positively regulates Wnt/beta-catenin signaling by translocating DVL into the nucleus. Reduces virus replication, probably by binding the interferon stimulated response element (ISRE) to promote antiviral gene expression. Accessory component of the polycomb repressive deubiquitinase (PR-DUB) complex; recruits the PR-DUB complex to specific FOXK1-bound genes. The polypeptide is Forkhead box protein K1 (Mus musculus (Mouse)).